Reading from the N-terminus, the 214-residue chain is MRIDPKRSRLKMVEEQIAARGVADKNVLDAMRRVPRHMFVQDALASRAYSDSALPIGEGQTISQPYIVAVMSELLQIESGHKVLEIGTGSGYQAAVLAEMGADVFSVERIRKLFISARKLLFDMRYFNIQLKLDDGTMGWPENAPYDRIIVTAGGPEIPQYLIDQLADPGILVIPVGGQRRVQRLMLVTKTDGKIETTDMGGCAFVDLVGKQGW.

Serine 63 is a catalytic residue.

This sequence belongs to the methyltransferase superfamily. L-isoaspartyl/D-aspartyl protein methyltransferase family.

It is found in the cytoplasm. It catalyses the reaction [protein]-L-isoaspartate + S-adenosyl-L-methionine = [protein]-L-isoaspartate alpha-methyl ester + S-adenosyl-L-homocysteine. Functionally, catalyzes the methyl esterification of L-isoaspartyl residues in peptides and proteins that result from spontaneous decomposition of normal L-aspartyl and L-asparaginyl residues. It plays a role in the repair and/or degradation of damaged proteins. In Maridesulfovibrio salexigens (strain ATCC 14822 / DSM 2638 / NCIMB 8403 / VKM B-1763) (Desulfovibrio salexigens), this protein is Protein-L-isoaspartate O-methyltransferase.